The following is a 380-amino-acid chain: Gibberellin 20 oxidase 3 (380 aa).

The Fe2OG dioxygenase domain occupies 221 to 321; sequence DSDSIFRLNY…RKTFAFFLCP (101 aa). Fe cation-binding residues include histidine 246, aspartate 248, and histidine 302. Arginine 312 is an active-site residue.

It belongs to the iron/ascorbate-dependent oxidoreductase family. GA20OX subfamily. The cofactor is Fe(2+). L-ascorbate serves as cofactor. Expressed at high level in developing siliques. Detected in seeds, roots, leaves and inflorescences. In seeds, specifically detected at the outer layer of the outer integument.

It carries out the reaction gibberellin A12 + 2 2-oxoglutarate + 3 O2 + H(+) = gibberellin A9 + 2 succinate + 3 CO2 + 2 H2O. It catalyses the reaction gibberellin A12 + 3 2-oxoglutarate + 3 O2 = gibberellin A25 + 3 succinate + 3 CO2 + H2O + H(+). The catalysed reaction is gibberellin A53 + 2 2-oxoglutarate + 3 O2 + H(+) = gibberellin A20 + 2 succinate + 3 CO2 + 2 H2O. The protein operates within plant hormone biosynthesis; gibberellin biosynthesis. Its function is as follows. Key oxidase enzyme in the biosynthesis of gibberellin that catalyzes the conversion of GA12 and GA53 to GA9 and GA20 respectively, via a three-step oxidation at C-20 of the GA skeleton, and GA25 is also formed as a minor product. GA53 is less effectively oxidized than GA12. This chain is Gibberellin 20 oxidase 3 (GA20OX3), found in Arabidopsis thaliana (Mouse-ear cress).